A 309-amino-acid chain; its full sequence is Mitochondrial import receptor subunit TOM34 (309 aa).

The residue at position 8 (Ser-8) is a Phosphoserine. TPR repeat units follow at residues 9 to 42, 51 to 84, and 85 to 118; these read VEQL…LQAR, SVLY…VPFS, and IKPL…DNSV. The segment at 158–189 is disordered; sequence WNSLPSDNHKETAKTKSKEATATKSRVPSAGD. Ser-160 is modified (phosphoserine). Residues 164–178 are compositionally biased toward basic and acidic residues; that stretch reads DNHKETAKTKSKEAT. Residue Ser-186 is modified to Phosphoserine. TPR repeat units follow at residues 193–226, 227–260, and 261–294; these read AKAL…SSLE, SATY…DGKN, and VKAF…EPRN. A Glycyl lysine isopeptide (Lys-Gly) (interchain with G-Cter in SUMO2) cross-link involves residue Lys-197.

Belongs to the Tom34 family. As to quaternary structure, interacts with HSP90A, VCP, ATP6V1D, KIAA0665, AMPK, and DMAP1 through its TPR repeat. As to expression, isoform 1 is ubiquitously expressed while isoform 2 is expressed only in mature testicular germ cells. Isoform 1 is expressed in all testicular cells. Isoform 2 is highly expressed in early to late pachytene cells but expression is significantly decreased in round spermatid cells.

It localises to the cytoplasm. It is found in the mitochondrion outer membrane. Plays a role in the import of cytosolically synthesized preproteins into mitochondria. Binds the mature portion of precursor proteins. Interacts with cellular components, and possesses weak ATPase activity. May be a chaperone-like protein that helps to keep newly synthesized precursors in an unfolded import compatible state. The sequence is that of Mitochondrial import receptor subunit TOM34 (Tomm34) from Mus musculus (Mouse).